The following is a 357-amino-acid chain: Protein pelota homolog (357 aa).

It belongs to the eukaryotic release factor 1 family. Pelota subfamily. As to quaternary structure, monomer. A divalent metal cation is required as a cofactor.

The protein localises to the cytoplasm. Its function is as follows. May function in recognizing stalled ribosomes, interact with stem-loop structures in stalled mRNA molecules, and effect endonucleolytic cleavage of the mRNA. May play a role in the release non-functional ribosomes and degradation of damaged mRNAs. Has endoribonuclease activity. This is Protein pelota homolog from Halobacterium salinarum (strain ATCC 29341 / DSM 671 / R1).